The following is a 174-amino-acid chain: Protein-lysine myristoyltransferase HlyC (174 aa).

Residues His-23 and Asp-92 contribute to the active site. His-151 is a heme binding site.

The protein belongs to the RTX toxin acyltransferase family. In terms of assembly, monomer. Post-translationally, proteolytically cleaved by the protease systems ClpAP, ClpXP and FtsH, leading to its degradation.

It localises to the cytoplasm. The catalysed reaction is tetradecanoyl-[ACP] + L-lysyl-[protein] = N(6)-tetradecanoyl-L-lysyl-[protein] + holo-[ACP] + H(+). The acyltransferase activity is inhibited by heme. Protein-lysine myristoyltransferase that catalyzes myristoylation of the protoxin (HlyA) at two internal lysine residues, thereby converting it to the active toxin. This is Protein-lysine myristoyltransferase HlyC from Escherichia coli.